Consider the following 168-residue polypeptide: Transcription antitermination protein NusB (168 aa).

The protein belongs to the NusB family.

In terms of biological role, involved in transcription antitermination. Required for transcription of ribosomal RNA (rRNA) genes. Binds specifically to the boxA antiterminator sequence of the ribosomal RNA (rrn) operons. The polypeptide is Transcription antitermination protein NusB (Brucella anthropi (strain ATCC 49188 / DSM 6882 / CCUG 24695 / JCM 21032 / LMG 3331 / NBRC 15819 / NCTC 12168 / Alc 37) (Ochrobactrum anthropi)).